Consider the following 358-residue polypeptide: Chorismate synthase (358 aa).

Position 46 (Arg46) interacts with NADP(+). Residues 123–125 (RSS), 235–236 (NA), Gly275, 290–294 (KATPS), and Arg316 contribute to the FMN site.

Belongs to the chorismate synthase family. In terms of assembly, homotetramer. It depends on FMNH2 as a cofactor.

The enzyme catalyses 5-O-(1-carboxyvinyl)-3-phosphoshikimate = chorismate + phosphate. It participates in metabolic intermediate biosynthesis; chorismate biosynthesis; chorismate from D-erythrose 4-phosphate and phosphoenolpyruvate: step 7/7. In terms of biological role, catalyzes the anti-1,4-elimination of the C-3 phosphate and the C-6 proR hydrogen from 5-enolpyruvylshikimate-3-phosphate (EPSP) to yield chorismate, which is the branch point compound that serves as the starting substrate for the three terminal pathways of aromatic amino acid biosynthesis. This reaction introduces a second double bond into the aromatic ring system. The sequence is that of Chorismate synthase from Aliarcobacter butzleri (strain RM4018) (Arcobacter butzleri).